Consider the following 740-residue polypeptide: ATP-dependent RNA helicase DBP7 (740 aa).

Positions 1-104 (MSFNDDDDGM…SNVEQPARVT (104 aa)) are disordered. Over residues 13–25 (NFTTDVSDASETV) the composition is skewed to polar residues. Over residues 43–60 (MMMEGRKPRVRGEKRPLE) the composition is skewed to basic and acidic residues. Positions 72–81 (ASSSNSTSAQ) are enriched in polar residues. The Q motif signature appears at 149 to 178 (DTFDSFGITDTMVSHLNVKMKISKPTKIQK). The region spanning 182–376 (PPFLQAQNDL…NVTLQNYKLI (195 aa)) is the Helicase ATP-binding domain. 195-202 (AQTGSGKT) is a binding site for ATP. The DEAD box motif lies at 311–314 (DEGD). One can recognise a Helicase C-terminal domain in the interval 414-607 (TITQKHYKEG…VLRPAFEGLN (194 aa)). A disordered region spans residues 695 to 721 (SMGLQQGKAGAAAAASQKKPKEDSKSK). Residues 697–711 (GLQQGKAGAAAAASQ) show a composition bias toward low complexity.

The protein belongs to the DEAD box helicase family. DDX31/DBP7 subfamily.

The protein resides in the nucleus. The protein localises to the nucleolus. The enzyme catalyses ATP + H2O = ADP + phosphate + H(+). ATP-binding RNA helicase involved in the biogenesis of 60S ribosomal subunits and is required for the normal formation of 25S and 5.8S rRNAs. This chain is ATP-dependent RNA helicase DBP7 (DBP7), found in Kluyveromyces lactis (strain ATCC 8585 / CBS 2359 / DSM 70799 / NBRC 1267 / NRRL Y-1140 / WM37) (Yeast).